We begin with the raw amino-acid sequence, 81 residues long: Photosystem I iron-sulfur center (81 aa).

4Fe-4S ferredoxin-type domains are found at residues 2 to 31 (SHTV…MVPW) and 39 to 68 (IASS…IRVY). [4Fe-4S] cluster is bound by residues Cys11, Cys14, Cys17, Cys21, Cys48, Cys51, Cys54, and Cys58.

In terms of assembly, the cyanobacterial PSI reaction center is composed of one copy each of PsaA,B,C,D,E,F,I,J,K,L,M and X, and forms trimeric complexes. Requires [4Fe-4S] cluster as cofactor.

The protein localises to the cellular thylakoid membrane. It carries out the reaction reduced [plastocyanin] + hnu + oxidized [2Fe-2S]-[ferredoxin] = oxidized [plastocyanin] + reduced [2Fe-2S]-[ferredoxin]. Functionally, apoprotein for the two 4Fe-4S centers FA and FB of photosystem I (PSI); essential for photochemical activity. FB is the terminal electron acceptor of PSI, donating electrons to ferredoxin. The C-terminus interacts with PsaA/B/D and helps assemble the protein into the PSI complex. Required for binding of PsaD and PsaE to PSI. PSI is a plastocyanin/cytochrome c6-ferredoxin oxidoreductase, converting photonic excitation into a charge separation, which transfers an electron from the donor P700 chlorophyll pair to the spectroscopically characterized acceptors A0, A1, FX, FA and FB in turn. This Microchaete diplosiphon (Fremyella diplosiphon) protein is Photosystem I iron-sulfur center.